The primary structure comprises 464 residues: Secretion-regulating guanine nucleotide exchange factor (464 aa).

7 RCC1 repeats span residues Ala15–Gly67, Gly68–Lys119, Gly120–Thr171, Gly172–Thr230, Gly231–Thr283, Gly284–Asp351, and Lys352–Cys402. Residues Asp422–Gln464 form a disordered region. Ser429 is subject to Phosphoserine.

In terms of assembly, interacts with SEC5. The interaction occurs only in the presence of magnesium or manganese and is stimulated by dCTP or GTP.

It is found in the cytoplasm. The protein localises to the nucleus. In terms of biological role, probable guanine nucleotide exchange factor (GEF), which may be involved in the secretion process. In Mus musculus (Mouse), this protein is Secretion-regulating guanine nucleotide exchange factor (Sergef).